Here is a 572-residue protein sequence, read N- to C-terminus: Cleavage stimulation factor subunit 2 (572 aa).

Residue serine 14 is modified to Phosphoserine. The RRM domain occupies 16–94 (RSVFVGNIPY…RALRVDNAAS (79 aa)). Residues 108–248 (APVIESPYGE…VNGAPPLMQA (141 aa)) form an interactions with CSTF3 and SYMPK region. Lysine 189 participates in a covalent cross-link: Glycyl lysine isopeptide (Lys-Gly) (interchain with G-Cter in SUMO2). A disordered region spans residues 208–230 (VHSAGPGSGSSVSMNQQNPQTPQ). The residue at position 308 (arginine 308) is an Omega-N-methylarginine. Residues 322-382 (LGDAPNDPRG…RGGPLTEPRP (61 aa)) form a disordered region. The segment covering 360–373 (PGHDSRGPPPHEMR) has biased composition (basic and acidic residues). The stretch at 410–414 (IDARA) is one 1; approximate repeat. The interval 410–464 (IDARAMEARGLDARGLEARAMEARAMEARAMEARAMEARAMEVRGMEARSMDTRG) is 11 X 5 AA tandem repeats of M-E-A-R-[AG]. Copy 2 of the repeat occupies 415-419 (MEARG). The 3; approximate repeat unit spans residues 420–424 (LDARG). One copy of the 4; approximate repeat lies at 425-429 (LEARA). A run of 4 repeats spans residues 430 to 434 (MEARA), 435 to 439 (MEARA), 440 to 444 (MEARA), and 445 to 449 (MEARA). One copy of the 9; approximate repeat lies at 450–454 (MEVRG). Repeat unit 10 spans residues 455–459 (MEARS). The 11; approximate repeat unit spans residues 460-464 (MDTRG). Omega-N-methylarginine is present on residues arginine 463 and arginine 470. The interval 509–572 (IQGGGQPGGF…EQIQKSTGAP (64 aa)) is interaction with RPO2TC1. The residue at position 519 (serine 519) is a Phosphoserine.

The CSTF complex is composed of CSTF1 (50 kDa subunit), CSTF2 (64 kDa subunit) and CSTF3 (77 kDa subunit). CSTF2 directly interacts with CSTF3, SYMPK and RPO2TC1. Interacts with HSF1 in heat-stressed cells. Interacts with CPSF2, CPSF3 and FIP1L1. Interacts with DDX1.

The protein localises to the nucleus. One of the multiple factors required for polyadenylation and 3'-end cleavage of mammalian pre-mRNAs. This subunit is directly involved in the binding to pre-mRNAs. This is Cleavage stimulation factor subunit 2 (CSTF2) from Bos taurus (Bovine).